The sequence spans 150 residues: UPF0178 protein ASA_3749 (150 aa).

Belongs to the UPF0178 family.

The chain is UPF0178 protein ASA_3749 from Aeromonas salmonicida (strain A449).